Consider the following 248-residue polypeptide: 3-oxoacyl-[acyl-carrier-protein] reductase FabG (248 aa).

Residues 14-17 (GGSR), 65-66 (DV), and N92 contribute to the NADP(+) site. S144 serves as a coordination point for substrate. Y157 acts as the Proton acceptor in catalysis. NADP(+) is bound by residues 157 to 161 (YAAAK) and I190.

This sequence belongs to the short-chain dehydrogenases/reductases (SDR) family. As to quaternary structure, homotetramer.

The enzyme catalyses a (3R)-hydroxyacyl-[ACP] + NADP(+) = a 3-oxoacyl-[ACP] + NADPH + H(+). Its pathway is lipid metabolism; fatty acid biosynthesis. In terms of biological role, catalyzes the NADPH-dependent reduction of beta-ketoacyl-ACP substrates to beta-hydroxyacyl-ACP products, the first reductive step in the elongation cycle of fatty acid biosynthesis. The polypeptide is 3-oxoacyl-[acyl-carrier-protein] reductase FabG (fabG) (Chlamydia muridarum (strain MoPn / Nigg)).